The primary structure comprises 459 residues: Endoglucanase EG-1 (459 aa).

The first 22 residues, 1–22 (MAPSVTLPLTTAILAIARLVAA), serve as a signal peptide directing secretion. Position 23 is a pyrrolidone carboxylic acid (Q23). Residues 23 to 397 (QQPGTSTPEV…DIGSTTNSTA (375 aa)) are catalytic. 8 disulfides stabilise this stretch: C41–C47, C71–C92, C82–C88, C161–C360, C193–C216, C197–C215, C236–C241, and C246–C315. The N-linked (GlcNAc) asparagine glycan is linked to N78. N-linked (GlcNAc...) (high mannose) asparagine glycosylation occurs at N204. The active-site Nucleophile is E218. The active-site Proton donor/acceptor is the E223. Residues 390 to 425 (GSTTNSTAPPPPPASSTTFSTTRRSSTTSSSPSCTQ) form a disordered region. N394 carries an N-linked (GlcNAc...) asparagine glycan. The segment at 398-423 (PPPPPASSTTFSTTRRSSTTSSSPSC) is linker. Residues 404–425 (SSTTFSTTRRSSTTSSSPSCTQ) show a composition bias toward low complexity. 3 cysteine pairs are disulfide-bonded: C423/C439, C431/C448, and C442/C458. Positions 423–459 (CTQTHWGQCGGIGYSGCKTCTSGTTCQYSNDYYSQCL) constitute a CBM1 domain.

The protein belongs to the glycosyl hydrolase 7 (cellulase C) family. Post-translationally, asn-204 contains mainly a high-mannose-type glycan (Hex(7-9)GlcNAc(2)), with a small fraction (8%) bearing a single GlcNAc at this site.

Its subcellular location is the secreted. The enzyme catalyses Endohydrolysis of (1-&gt;4)-beta-D-glucosidic linkages in cellulose, lichenin and cereal beta-D-glucans.. In terms of biological role, endoglucanase (EG) that cleaves the internal beta-1,4-glucosidic bonds in cellulose. The degradation of cellulose involves an interplay between different cellulolytic enzymes. Hydrolysis starts with EGs, which cut internal glycosidic linkages to reduce the polymerization degree of the substrate and creates new chain ends for exocellobiohydrolases (CBHs). The CBH release the disaccharide cellobiose from the non-reducing end of the cellulose polymer chain. Finally, beta-1,4-glucosidases hydrolyze the cellobiose and other short cello-oligosaccharides into glucose units. The chain is Endoglucanase EG-1 (egl1) from Hypocrea jecorina (Trichoderma reesei).